We begin with the raw amino-acid sequence, 272 residues long: Tryptophan synthase alpha chain (272 aa).

Residues Glu60 and Asp71 each act as proton acceptor in the active site.

It belongs to the TrpA family. Tetramer of two alpha and two beta chains.

It catalyses the reaction (1S,2R)-1-C-(indol-3-yl)glycerol 3-phosphate + L-serine = D-glyceraldehyde 3-phosphate + L-tryptophan + H2O. Its pathway is amino-acid biosynthesis; L-tryptophan biosynthesis; L-tryptophan from chorismate: step 5/5. Functionally, the alpha subunit is responsible for the aldol cleavage of indoleglycerol phosphate to indole and glyceraldehyde 3-phosphate. The protein is Tryptophan synthase alpha chain of Methanosarcina acetivorans (strain ATCC 35395 / DSM 2834 / JCM 12185 / C2A).